The chain runs to 823 residues: ATP-dependent DNA helicase At3g02060, chloroplastic (823 aa).

A chloroplast-targeting transit peptide spans 1–53; it reads MMSLLPNPDPITVPLVLKLCSFPPPRRLFSLRLRRFTRKSSSLLPLVAVSSLS. In terms of domain architecture, Helicase ATP-binding spans 285–447; that stretch reads LTERETPMDR…LTGFRDASLI (163 aa). 298-305 is a binding site for ATP; it reads GDVGFGKT. The DEEQ box signature appears at 400-403; sequence DEEQ. The 158-residue stretch at 465-622 folds into the Helicase C-terminal domain; sequence RKEKVIEAIK…GFQLAEKDMG (158 aa).

The protein belongs to the helicase family.

It localises to the plastid. The protein localises to the chloroplast. The enzyme catalyses ATP + H2O = ADP + phosphate + H(+). The protein is ATP-dependent DNA helicase At3g02060, chloroplastic of Arabidopsis thaliana (Mouse-ear cress).